The chain runs to 451 residues: UDP-N-acetylmuramoylalanine--D-glutamate ligase (451 aa).

Position 120 to 126 (120 to 126 (GSNGKTT)) interacts with ATP.

Belongs to the MurCDEF family.

The protein localises to the cytoplasm. It carries out the reaction UDP-N-acetyl-alpha-D-muramoyl-L-alanine + D-glutamate + ATP = UDP-N-acetyl-alpha-D-muramoyl-L-alanyl-D-glutamate + ADP + phosphate + H(+). Its pathway is cell wall biogenesis; peptidoglycan biosynthesis. Cell wall formation. Catalyzes the addition of glutamate to the nucleotide precursor UDP-N-acetylmuramoyl-L-alanine (UMA). In Bacillus velezensis (strain DSM 23117 / BGSC 10A6 / LMG 26770 / FZB42) (Bacillus amyloliquefaciens subsp. plantarum), this protein is UDP-N-acetylmuramoylalanine--D-glutamate ligase.